We begin with the raw amino-acid sequence, 302 residues long: Aspartate carbamoyltransferase catalytic subunit (302 aa).

Carbamoyl phosphate-binding residues include Arg51 and Thr52. Lys80 is an L-aspartate binding site. Carbamoyl phosphate is bound by residues Arg101, His129, and Gln132. The L-aspartate site is built by Arg162 and Arg224. Residues Leu263 and Pro264 each coordinate carbamoyl phosphate.

Belongs to the aspartate/ornithine carbamoyltransferase superfamily. ATCase family. In terms of assembly, heterododecamer (2C3:3R2) of six catalytic PyrB chains organized as two trimers (C3), and six regulatory PyrI chains organized as three dimers (R2).

It catalyses the reaction carbamoyl phosphate + L-aspartate = N-carbamoyl-L-aspartate + phosphate + H(+). It participates in pyrimidine metabolism; UMP biosynthesis via de novo pathway; (S)-dihydroorotate from bicarbonate: step 2/3. Functionally, catalyzes the condensation of carbamoyl phosphate and aspartate to form carbamoyl aspartate and inorganic phosphate, the committed step in the de novo pyrimidine nucleotide biosynthesis pathway. This is Aspartate carbamoyltransferase catalytic subunit from Azobacteroides pseudotrichonymphae genomovar. CFP2.